The following is a 553-amino-acid chain: LIM domain-containing protein B (553 aa).

Positions 43–115 (LTYKDPNVST…SINNNISNNN (73 aa)) are disordered. Residues 99–114 (GPGLPNNSINNNISNN) show a composition bias toward low complexity. 5 consecutive LIM zinc-binding domains span residues 205–262 (PICG…ELFS), 263–322 (PRCF…RQKR), 328–387 (EICS…KQIL), 388–447 (NICG…FFGR), and 448–505 (QCFK…LPKE). The interval 534 to 553 (ELKKERERAAKEKEKESKAK) is disordered.

Its subcellular location is the cytoplasm. It localises to the cell cortex. The protein resides in the cytoskeleton. In terms of biological role, regulates and controls rearrangements of the actin cytoskeleton. Required for tip formation, morphogenesis, cell adhesion and motility, chemotaxis and aggregates formation. May function downstream of paxB. This chain is LIM domain-containing protein B (limB), found in Dictyostelium discoideum (Social amoeba).